Here is a 362-residue protein sequence, read N- to C-terminus: Phosphoserine aminotransferase (362 aa).

L-glutamate-binding residues include Ser9 and Arg42. Residues 76–77, Trp102, Thr153, Asp174, and Gln197 each bind pyridoxal 5'-phosphate; that span reads GR. Lys198 is modified (N6-(pyridoxal phosphate)lysine). 239-240 serves as a coordination point for pyridoxal 5'-phosphate; that stretch reads NT.

The protein belongs to the class-V pyridoxal-phosphate-dependent aminotransferase family. SerC subfamily. As to quaternary structure, homodimer. The cofactor is pyridoxal 5'-phosphate.

The protein localises to the cytoplasm. The catalysed reaction is O-phospho-L-serine + 2-oxoglutarate = 3-phosphooxypyruvate + L-glutamate. It catalyses the reaction 4-(phosphooxy)-L-threonine + 2-oxoglutarate = (R)-3-hydroxy-2-oxo-4-phosphooxybutanoate + L-glutamate. It functions in the pathway amino-acid biosynthesis; L-serine biosynthesis; L-serine from 3-phospho-D-glycerate: step 2/3. It participates in cofactor biosynthesis; pyridoxine 5'-phosphate biosynthesis; pyridoxine 5'-phosphate from D-erythrose 4-phosphate: step 3/5. Functionally, catalyzes the reversible conversion of 3-phosphohydroxypyruvate to phosphoserine and of 3-hydroxy-2-oxo-4-phosphonooxybutanoate to phosphohydroxythreonine. The sequence is that of Phosphoserine aminotransferase from Escherichia coli O7:K1 (strain IAI39 / ExPEC).